A 267-amino-acid chain; its full sequence is Small ribosomal subunit protein uS2 (267 aa).

Residues 237-267 (IGESAAAPSEPALETASAEATAEGEQPGSQA) form a disordered region. A compositionally biased stretch (low complexity) spans 238-261 (GESAAAPSEPALETASAEATAEGE).

It belongs to the universal ribosomal protein uS2 family.

This is Small ribosomal subunit protein uS2 from Chelativorans sp. (strain BNC1).